A 384-amino-acid polypeptide reads, in one-letter code: MAAGAGPGSAATMYVCGITPYDATHLGHAATYLAFDLIYRQWLDLGHDVHYVQNVTDVDDPLLERAARDGIDWRALAEREVSLFREDMAALRILAPRDYVGATEAIADVVELVEKMLASGAAYVVDGEFPDIYYRADATLQFGYESGYDRETMLRLFAERGGDPQRPGKTDALDALLWRAARPGEPSWPSPFGNGRPGWHVECAAIALSRIGSGLDIQGGGSDLIFPHHEFTAAHAECVRGERRFARHYVHAGMIGWDGHKMSKSRGNLVLVSQLRGRGVEPAAIRLGLLAGHFRGDRYWSDQVLDEATARLRRWRTATALPAGPDATDVIARVRQYLADDLNTPKALAALDGWTTDALDYGGHDTAAPRLVATAVDALLGVAL.

C16 is a binding site for Zn(2+). L-cysteinyl-5'-AMP is bound by residues 16-19, T31, and 54-56; these read CGIT and NVT. Residues 18–28 carry the 'HIGH' region motif; sequence ITPYDATHLGH. The 'ERGGDP' region motif lies at 159 to 164; that stretch reads ERGGDP. W199 is an L-cysteinyl-5'-AMP binding site. Zn(2+) is bound at residue C203. 221–223 is a binding site for L-cysteinyl-5'-AMP; sequence GSD. Residue H228 coordinates Zn(2+). Position 255 (I255) interacts with L-cysteinyl-5'-AMP. Positions 261–265 match the 'KMSKS' region motif; sequence KMSKS.

Belongs to the class-I aminoacyl-tRNA synthetase family. MshC subfamily. As to quaternary structure, monomer. Zn(2+) serves as cofactor.

The catalysed reaction is 1D-myo-inositol 2-amino-2-deoxy-alpha-D-glucopyranoside + L-cysteine + ATP = 1D-myo-inositol 2-(L-cysteinylamino)-2-deoxy-alpha-D-glucopyranoside + AMP + diphosphate + H(+). Functionally, catalyzes the ATP-dependent condensation of GlcN-Ins and L-cysteine to form L-Cys-GlcN-Ins. In Mycobacterium avium (strain 104), this protein is L-cysteine:1D-myo-inositol 2-amino-2-deoxy-alpha-D-glucopyranoside ligase.